We begin with the raw amino-acid sequence, 701 residues long: MNPVIKTFQFGQSTVTLETGRIARQATGAVLVTVDNDVTVLVTVVGAKQADPGKGFFPLSVHYQEKTYAAGKIPGGFFKREGRPSEKETLTSRLIDRPIRPLFPEGFMNEVQVVCTVVSTSKKTDPDIAAMIGTSAALAISGIPFEGPIGAARVAFHESTGYLLNPTYEQLAASSLDMVVAGTSDAVLMVESEAQELTEDQMLGAVLFAHDEFQAVIKAVKELAAEAAKPTWDWKPADKNSALFDAIRAEFGEAVSQGYTITVKADRYARLGELRDQAVAKFSGEEGQPSAGEVKDIFGEIEYRTVRENIVNGKPRIDGRDTKTVRPLNIEVGVLPKTHGSALFTRGETQALVVATLGTARDAQLLDTLEGEKKDPFMLHYNFPPFSVGECGRMGGAGRREIGHGRLARRSVQAMLPAADVFPYTIRVVSEITESNGSSSMASVCGASLALMDAGVPMKAPVAGIAMGLVKEGEKFAVLTDILGDEDHLGDMDFKVAGTAKGVTALQMDIKINGITEEIMEIALGQALEARLNILGQMNQIIGESRTELSANAPTMIAMKIDTDKIRDVIGKGGATIRAICEETKASIDIEDDGSIKIFGETKEAADAAKQRILGITAEAEIGKIYVGKVERIVDFGAFVNILPGKDGLVHISMLSDARVEKVTDVLKEGQEVEVLVLDVDNRGRIKLSIKDVAAAKASGV.

Mg(2+)-binding residues include Asp487 and Asp493. One can recognise a KH domain in the interval 554–613 (PTMIAMKIDTDKIRDVIGKGGATIRAICEETKASIDIEDDGSIKIFGETKEAADAAKQRI). The S1 motif domain occupies 623-691 (GKIYVGKVER…NRGRIKLSIK (69 aa)).

The protein belongs to the polyribonucleotide nucleotidyltransferase family. As to quaternary structure, component of the RNA degradosome, which is a multiprotein complex involved in RNA processing and mRNA degradation. Mg(2+) serves as cofactor.

Its subcellular location is the cytoplasm. The catalysed reaction is RNA(n+1) + phosphate = RNA(n) + a ribonucleoside 5'-diphosphate. Its function is as follows. Involved in mRNA degradation. Catalyzes the phosphorolysis of single-stranded polyribonucleotides processively in the 3'- to 5'-direction. This chain is Polyribonucleotide nucleotidyltransferase, found in Pseudomonas entomophila (strain L48).